The primary structure comprises 172 residues: Signal peptidase complex catalytic subunit SEC11 (172 aa).

Topologically, residues 1–14 are cytoplasmic; it reads MLSGLQNPRQAAAQ. The helical; Signal-anchor for type II membrane protein transmembrane segment at 15–35 threads the bilayer; that stretch reads LMNFALILSTAFMMWKGLSVA. At 36-172 the chain is on the lumenal side; sequence TDSPSPIVVV…MGLLVVIQRE (137 aa). Active-site charge relay system residues include Ser-49, His-90, and Asp-115. Residues 158-169 are C-terminal short (CTS) helix; sequence VMLGIMGLLVVI.

The protein belongs to the peptidase S26B family. In terms of assembly, component of the signal peptidase complex (SPC) composed of a catalytic subunit SEC11 and three accessory subunits SPC1, SPC2 and SPC3. The complex induces a local thinning of the ER membrane which is used to measure the length of the signal peptide (SP) h-region of protein substrates. This ensures the selectivity of the complex towards h-regions shorter than 18-20 amino acids. SPC associates with the translocon complex.

It localises to the endoplasmic reticulum membrane. The enzyme catalyses Cleavage of hydrophobic, N-terminal signal or leader sequences from secreted and periplasmic proteins.. In terms of biological role, catalytic component of the signal peptidase complex (SPC) which catalyzes the cleavage of N-terminal signal sequences from nascent proteins as they are translocated into the lumen of the endoplasmic reticulum. Specifically cleaves N-terminal signal peptides that contain a hydrophobic alpha-helix (h-region) shorter than 18-20 amino acids. The sequence is that of Signal peptidase complex catalytic subunit SEC11 (SEC11) from Metarhizium acridum (strain CQMa 102).